We begin with the raw amino-acid sequence, 186 residues long: Acireductone dioxygenase (186 aa).

Residues histidine 103, histidine 105, glutamate 109, and histidine 147 each coordinate Fe(2+). The Ni(2+) site is built by histidine 103, histidine 105, glutamate 109, and histidine 147.

Belongs to the acireductone dioxygenase (ARD) family. Monomer. The cofactor is Fe(2+). It depends on Ni(2+) as a cofactor.

The catalysed reaction is 1,2-dihydroxy-5-(methylsulfanyl)pent-1-en-3-one + O2 = 3-(methylsulfanyl)propanoate + CO + formate + 2 H(+). It catalyses the reaction 1,2-dihydroxy-5-(methylsulfanyl)pent-1-en-3-one + O2 = 4-methylsulfanyl-2-oxobutanoate + formate + 2 H(+). The protein operates within amino-acid biosynthesis; L-methionine biosynthesis via salvage pathway; L-methionine from S-methyl-5-thio-alpha-D-ribose 1-phosphate: step 5/6. In terms of biological role, catalyzes 2 different reactions between oxygen and the acireductone 1,2-dihydroxy-3-keto-5-methylthiopentene (DHK-MTPene) depending upon the metal bound in the active site. Fe-containing acireductone dioxygenase (Fe-ARD) produces formate and 2-keto-4-methylthiobutyrate (KMTB), the alpha-ketoacid precursor of methionine in the methionine recycle pathway. Ni-containing acireductone dioxygenase (Ni-ARD) produces methylthiopropionate, carbon monoxide and formate, and does not lie on the methionine recycle pathway. The chain is Acireductone dioxygenase from Synechococcus sp. (strain CC9605).